A 344-amino-acid chain; its full sequence is tRNA N6-adenosine threonylcarbamoyltransferase (344 aa).

Fe cation is bound by residues His-111 and His-115. Residues 134 to 138 (LVSGG), Asp-167, Gly-180, and Asn-273 each bind substrate. Residue Asp-301 coordinates Fe cation.

The protein belongs to the KAE1 / TsaD family. The cofactor is Fe(2+).

The protein localises to the cytoplasm. The catalysed reaction is L-threonylcarbamoyladenylate + adenosine(37) in tRNA = N(6)-L-threonylcarbamoyladenosine(37) in tRNA + AMP + H(+). Functionally, required for the formation of a threonylcarbamoyl group on adenosine at position 37 (t(6)A37) in tRNAs that read codons beginning with adenine. Is involved in the transfer of the threonylcarbamoyl moiety of threonylcarbamoyl-AMP (TC-AMP) to the N6 group of A37, together with TsaE and TsaB. TsaD likely plays a direct catalytic role in this reaction. In Cupriavidus taiwanensis (strain DSM 17343 / BCRC 17206 / CCUG 44338 / CIP 107171 / LMG 19424 / R1) (Ralstonia taiwanensis (strain LMG 19424)), this protein is tRNA N6-adenosine threonylcarbamoyltransferase.